A 259-amino-acid chain; its full sequence is 3-deoxy-manno-octulosonate cytidylyltransferase (259 aa).

It belongs to the KdsB family.

Its subcellular location is the cytoplasm. The catalysed reaction is 3-deoxy-alpha-D-manno-oct-2-ulosonate + CTP = CMP-3-deoxy-beta-D-manno-octulosonate + diphosphate. It participates in nucleotide-sugar biosynthesis; CMP-3-deoxy-D-manno-octulosonate biosynthesis; CMP-3-deoxy-D-manno-octulosonate from 3-deoxy-D-manno-octulosonate and CTP: step 1/1. It functions in the pathway bacterial outer membrane biogenesis; lipopolysaccharide biosynthesis. Its function is as follows. Activates KDO (a required 8-carbon sugar) for incorporation into bacterial lipopolysaccharide in Gram-negative bacteria. This is 3-deoxy-manno-octulosonate cytidylyltransferase from Actinobacillus succinogenes (strain ATCC 55618 / DSM 22257 / CCUG 43843 / 130Z).